Here is a 289-residue protein sequence, read N- to C-terminus: Protein FraH (289 aa).

A DZANK-type zinc finger spans residues Cys-4 to Gly-49. A zinc finger lies at Cys-18–Cys-48. Positions Val-204–Leu-260 constitute an FHA domain.

Putative heterocyst to vegetative cell connection. This is Protein FraH (fraH) from Nostoc sp. (strain PCC 7120 / SAG 25.82 / UTEX 2576).